The primary structure comprises 745 residues: Multiple C2 domain and transmembrane region protein 13 (745 aa).

A disordered region spans residues 1–30; the sequence is MAANKDEFSVKQISPKLGGERGARNPYGPT. C2 domains lie at 21–139, 171–293, and 326–453; these read RGAR…PQRY, DASE…SAPA, and AEES…ACSY. Residues aspartate 56, aspartate 61, aspartate 106, and asparagine 110 each contribute to the Ca(2+) site. A run of 2 helical transmembrane segments spans residues 568–588 and 688–708; these read SLIV…LVGL and FYCW…PMWL.

It belongs to the MCTP family. Requires Ca(2+) as cofactor. As to expression, expressed in incipient leaf primordia.

The protein resides in the cell membrane. The protein localises to the cytoplasm. May function as a signaling molecule by regulating the trafficking of other regulators. In Arabidopsis thaliana (Mouse-ear cress), this protein is Multiple C2 domain and transmembrane region protein 13.